We begin with the raw amino-acid sequence, 910 residues long: DNA mismatch repair protein MutS (910 aa).

Over residues 1–11 (MEAKVEEKEPE) the composition is skewed to basic and acidic residues. The segment at 1-21 (MEAKVEEKEPEPVENAGPDAP) is disordered. Position 658 to 665 (658 to 665 (GPNMGGKS)) interacts with ATP.

This sequence belongs to the DNA mismatch repair MutS family.

Functionally, this protein is involved in the repair of mismatches in DNA. It is possible that it carries out the mismatch recognition step. This protein has a weak ATPase activity. This is DNA mismatch repair protein MutS from Brucella melitensis biotype 1 (strain ATCC 23456 / CCUG 17765 / NCTC 10094 / 16M).